A 2058-amino-acid polypeptide reads, in one-letter code: E3 ubiquitin-protein ligase ubr-1 (2058 aa).

Residues Gln-93–Lys-164 form a UBR-type zinc finger. The interval Val-1107–Val-1175 is disordered. Over residues Pro-1108–Ala-1119 the composition is skewed to low complexity. Composition is skewed to basic and acidic residues over residues Glu-1123–Gln-1138 and Lys-1153–Val-1175. An RING-type; atypical zinc finger spans residues Leu-1217–Arg-1335. 2 disordered regions span residues Leu-1381–Asn-1416 and Pro-1475–Lys-1499. The span at Lys-1388–His-1397 shows a compositional bias: basic residues. The span at Ser-1398–Asp-1413 shows a compositional bias: basic and acidic residues. Positions Gly-1486 to Gln-1495 are enriched in polar residues. Residues Ile-1695–Trp-1715 traverse the membrane as a helical segment.

The protein belongs to the E3 ubiquitin-protein ligase UBR1-like family. In terms of assembly, interacts with ubc-1. Component of a complex containing at least ced-3, ubr-1 and possibly ate-1. Within complex interacts with ced-3 (via the p17 subunit); this interaction is required for the ced-3-mediated cleavage and subsequent degradation of the heterochronic protein lin-28. In terms of tissue distribution, expressed in pharyngeal muscles, body wall muscles and a subset of neurons throughout postembryonic development. Prominently expressed in premotor interneurons, but not expressed in ventral cord motor neurons. Weakly expressed in hypodermal seam cells.

Its subcellular location is the membrane. The catalysed reaction is S-ubiquitinyl-[E2 ubiquitin-conjugating enzyme]-L-cysteine + [acceptor protein]-L-lysine = [E2 ubiquitin-conjugating enzyme]-L-cysteine + N(6)-ubiquitinyl-[acceptor protein]-L-lysine.. Its pathway is protein modification; protein ubiquitination. In terms of biological role, E3 ubiquitin-protein ligase which is a component of the N-end rule pathway. Recognizes and binds to proteins bearing specific N-terminal residues that are destabilizing according to the N-end rule, leading to their ubiquitination and subsequent degradation. In complex with ced-3, required for the ced-3-mediated cleavage and subsequent degradation of the heterochronic protein lin-28 to regulate seam cell fate patterning during larval development. Negatively regulates glutamate metabolism through the aspartate aminotransferase got-1.2. Modulation of glutamate levels most likely controls locomotory behavior, in particular backwards locomotion or 'reversals'. This chain is E3 ubiquitin-protein ligase ubr-1, found in Caenorhabditis elegans.